Here is a 970-residue protein sequence, read N- to C-terminus: ATP-dependent DNA helicase DDX11 (970 aa).

Residues 9-445 (GAIHFPFPFT…KNLMYLKQIL (437 aa)) enclose the Helicase ATP-binding domain. Position 44 to 51 (44 to 51 (SPTGTGKS)) interacts with ATP. Residue Ser-262 is modified to Phosphoserine. 2 residues coordinate [4Fe-4S] cluster: Cys-267 and Cys-285. Positions 289 to 304 (QRSRHEKKKGAEEEKP) are enriched in basic and acidic residues. The segment at 289-312 (QRSRHEKKKGAEEEKPKRRRQEKQ) is disordered. Cys-315 and Cys-350 together coordinate [4Fe-4S] cluster. Positions 393 to 396 (DEAH) match the DEAH box motif. The tract at residues 818 to 849 (TLSPRPGTPREGSGGEPVHEGRQPVHRQGHQA) is disordered.

It belongs to the DEAD box helicase family. DEAH subfamily. DDX11/CHL1 sub-subfamily. In terms of assembly, associates with the CTF18-RFC complex. Associates with a cohesin complex composed of RAD21, SMC1 proteins and SMC3. Interacts with CHTF18. Interacts with DSCC1. Interacts with FEN1; this interaction is direct and increases flap endonuclease activity of FEN1. Interacts with PCNA. Interacts with POLR1A and UBTF. Interacts with RAD21, SMC1 proteins and SMC3. Interacts with RFC2. Interacts with TIMELESS; this interaction increases recruitment of both proteins onto chromatin in response to replication stress induction by hydroxyurea. As to quaternary structure, (Microbial infection) Interacts with bovine papillomavirus type 1 regulatory protein E2; this interaction stimulates the recruitment of E2 onto mitotic chromosomes. Mg(2+) serves as cofactor. Requires [4Fe-4S] cluster as cofactor. In terms of tissue distribution, expressed in melanoma cells. Not detected in epidermal melanocytes of normal skin (at protein level). Highly expressed in spleen, B-cells, thymus, testis, ovary, small intestine and pancreas. Very low expression seen in brain. Expressed in dividing cells and/or cells undergoing high levels of recombination. No expression detected in cells signaled to terminally differentiate. Expressed weakly in keratinocytes.

Its subcellular location is the nucleus. It localises to the nucleolus. The protein localises to the cytoplasm. The protein resides in the cytoskeleton. It is found in the spindle pole. Its subcellular location is the midbody. It localises to the microtubule organizing center. The protein localises to the centrosome. The protein resides in the chromosome. The catalysed reaction is Couples ATP hydrolysis with the unwinding of duplex DNA at the replication fork by translocating in the 5'-3' direction. This creates two antiparallel DNA single strands (ssDNA). The leading ssDNA polymer is the template for DNA polymerase III holoenzyme which synthesizes a continuous strand.. It carries out the reaction ATP + H2O = ADP + phosphate + H(+). With respect to regulation, ATPase activity is stimulated by high magnesium salt levels (up to a 0.1 M), and potassium salts (glutamate, chloride or acetate) are more effective than the corresponding sodium salts. ATPase activity is enhanced by the long non-coding RNA (lncRNA) cohesion regulator noncoding RNA (CONCR). Double-stranded DNA helicase activity is maximal with magnesium ions at low concentrations (0.5-1 mM) whereas is markedly inhibited at higher levels (5 mM and above). Double-stranded DNA helicase activity is stimulated by 25-50 mM potassium acetate, stimulated to a lesser extent by 25 mM of ammonium acetate, and markedly inhibited by sodium acetate. Its function is as follows. DNA-dependent ATPase and ATP-dependent DNA helicase that participates in various functions in genomic stability, including DNA replication, DNA repair and heterochromatin organization as well as in ribosomal RNA synthesis. Its double-stranded DNA helicase activity requires either a minimal 5'-single-stranded tail length of approximately 15 nt (flap substrates) or 10 nt length single-stranded gapped DNA substrates of a partial duplex DNA structure for helicase loading and translocation along DNA in a 5' to 3' direction. The helicase activity is capable of displacing duplex regions up to 100 bp, which can be extended up to 500 bp by the replication protein A (RPA) or the cohesion CTF18-replication factor C (Ctf18-RFC) complex activities. Also shows ATPase- and helicase activities on substrates that mimic key DNA intermediates of replication, repair and homologous recombination reactions, including forked duplex, anti-parallel G-quadruplex and three-stranded D-loop DNA molecules. Plays a role in DNA double-strand break (DSB) repair at the DNA replication fork during DNA replication recovery from DNA damage. Recruited with TIMELESS factor upon DNA-replication stress response at DNA replication fork to preserve replication fork progression, and hence ensure DNA replication fidelity. Also cooperates with TIMELESS factor during DNA replication to regulate proper sister chromatid cohesion and mitotic chromosome segregation. Stimulates 5'-single-stranded DNA flap endonuclease activity of FEN1 in an ATP- and helicase-independent manner; and hence it may contribute in Okazaki fragment processing at DNA replication fork during lagging strand DNA synthesis. Its ability to function at DNA replication fork is modulated by its binding to long non-coding RNA (lncRNA) cohesion regulator non-coding RNA DDX11-AS1/CONCR, which is able to increase both DDX11 ATPase activity and binding to DNA replicating regions. Also plays a role in heterochromatin organization. Involved in rRNA transcription activation through binding to active hypomethylated rDNA gene loci by recruiting UBTF and the RNA polymerase Pol I transcriptional machinery. Plays a role in embryonic development and prevention of aneuploidy. Involved in melanoma cell proliferation and survival. Associates with chromatin at DNA replication fork regions. Binds to single- and double-stranded DNAs. Functionally, (Microbial infection) Required for bovine papillomavirus type 1 regulatory protein E2 loading onto mitotic chromosomes during DNA replication for the viral genome to be maintained and segregated. The protein is ATP-dependent DNA helicase DDX11 of Homo sapiens (Human).